We begin with the raw amino-acid sequence, 129 residues long: Large ribosomal subunit protein bL20 (129 aa).

Belongs to the bacterial ribosomal protein bL20 family.

Its function is as follows. Binds directly to 23S ribosomal RNA and is necessary for the in vitro assembly process of the 50S ribosomal subunit. It is not involved in the protein synthesizing functions of that subunit. This chain is Large ribosomal subunit protein bL20, found in Mycolicibacterium smegmatis (strain ATCC 700084 / mc(2)155) (Mycobacterium smegmatis).